We begin with the raw amino-acid sequence, 277 residues long: 4-hydroxy-3-methylbut-2-enyl diphosphate reductase (277 aa).

Position 12 (Cys12) interacts with [4Fe-4S] cluster. Residues His36 and His70 each coordinate (2E)-4-hydroxy-3-methylbut-2-enyl diphosphate. His36 and His70 together coordinate dimethylallyl diphosphate. Residues His36 and His70 each coordinate isopentenyl diphosphate. Cys92 provides a ligand contact to [4Fe-4S] cluster. His120 contacts (2E)-4-hydroxy-3-methylbut-2-enyl diphosphate. His120 lines the dimethylallyl diphosphate pocket. His120 is an isopentenyl diphosphate binding site. The Proton donor role is filled by Glu122. Thr160 contributes to the (2E)-4-hydroxy-3-methylbut-2-enyl diphosphate binding site. A [4Fe-4S] cluster-binding site is contributed by Cys188. (2E)-4-hydroxy-3-methylbut-2-enyl diphosphate contacts are provided by Ser216, Ser217, Asn218, and Ser260. The dimethylallyl diphosphate site is built by Ser216, Ser217, Asn218, and Ser260. 4 residues coordinate isopentenyl diphosphate: Ser216, Ser217, Asn218, and Ser260.

Belongs to the IspH family. [4Fe-4S] cluster serves as cofactor.

The catalysed reaction is isopentenyl diphosphate + 2 oxidized [2Fe-2S]-[ferredoxin] + H2O = (2E)-4-hydroxy-3-methylbut-2-enyl diphosphate + 2 reduced [2Fe-2S]-[ferredoxin] + 2 H(+). It carries out the reaction dimethylallyl diphosphate + 2 oxidized [2Fe-2S]-[ferredoxin] + H2O = (2E)-4-hydroxy-3-methylbut-2-enyl diphosphate + 2 reduced [2Fe-2S]-[ferredoxin] + 2 H(+). Its pathway is isoprenoid biosynthesis; dimethylallyl diphosphate biosynthesis; dimethylallyl diphosphate from (2E)-4-hydroxy-3-methylbutenyl diphosphate: step 1/1. It functions in the pathway isoprenoid biosynthesis; isopentenyl diphosphate biosynthesis via DXP pathway; isopentenyl diphosphate from 1-deoxy-D-xylulose 5-phosphate: step 6/6. Its function is as follows. Catalyzes the conversion of 1-hydroxy-2-methyl-2-(E)-butenyl 4-diphosphate (HMBPP) into a mixture of isopentenyl diphosphate (IPP) and dimethylallyl diphosphate (DMAPP). Acts in the terminal step of the DOXP/MEP pathway for isoprenoid precursor biosynthesis. The chain is 4-hydroxy-3-methylbut-2-enyl diphosphate reductase from Sulfurovum sp. (strain NBC37-1).